The chain runs to 569 residues: Proline--tRNA ligase (569 aa).

It belongs to the class-II aminoacyl-tRNA synthetase family. ProS type 1 subfamily. As to quaternary structure, homodimer.

The protein resides in the cytoplasm. It catalyses the reaction tRNA(Pro) + L-proline + ATP = L-prolyl-tRNA(Pro) + AMP + diphosphate. Functionally, catalyzes the attachment of proline to tRNA(Pro) in a two-step reaction: proline is first activated by ATP to form Pro-AMP and then transferred to the acceptor end of tRNA(Pro). As ProRS can inadvertently accommodate and process non-cognate amino acids such as alanine and cysteine, to avoid such errors it has two additional distinct editing activities against alanine. One activity is designated as 'pretransfer' editing and involves the tRNA(Pro)-independent hydrolysis of activated Ala-AMP. The other activity is designated 'posttransfer' editing and involves deacylation of mischarged Ala-tRNA(Pro). The misacylated Cys-tRNA(Pro) is not edited by ProRS. This is Proline--tRNA ligase from Shewanella woodyi (strain ATCC 51908 / MS32).